The following is a 275-amino-acid chain: uncharacterized protein (275 aa).

It belongs to the SMP-30/CGR1 family.

This is an uncharacterized protein from Sulfolobus acidocaldarius (strain ATCC 33909 / DSM 639 / JCM 8929 / NBRC 15157 / NCIMB 11770).